The sequence spans 302 residues: Acetylglutamate kinase (302 aa).

Residues 75–76 (GG), Arg-97, and Asn-198 contribute to the substrate site.

It belongs to the acetylglutamate kinase family. ArgB subfamily.

It localises to the cytoplasm. The catalysed reaction is N-acetyl-L-glutamate + ATP = N-acetyl-L-glutamyl 5-phosphate + ADP. It participates in amino-acid biosynthesis; L-arginine biosynthesis; N(2)-acetyl-L-ornithine from L-glutamate: step 2/4. Catalyzes the ATP-dependent phosphorylation of N-acetyl-L-glutamate. This Leifsonia xyli subsp. xyli (strain CTCB07) protein is Acetylglutamate kinase.